The sequence spans 134 residues: Late embryogenesis abundant protein 6 (134 aa).

The span at 31–45 (ERAMARTKEEKEIAH) shows a compositional bias: basic and acidic residues. 2 disordered regions span residues 31–53 (ERAM…AKEA) and 80–134 (VTDH…HHHY). Positions 34–70 (MARTKEEKEIAHQRRKAKEAEANMDMHMAKAAHAEDK) form a coiled coil. Low complexity predominate over residues 115-127 (PPQTYHPTYPPTG).

It belongs to the LEA type 1 family.

Functionally, involved dehydration tolerance. Involved in the adaptive response of vascular plants to withstand water deficit. May possess chaperone-like activity under water deficit. This chain is Late embryogenesis abundant protein 6, found in Arabidopsis thaliana (Mouse-ear cress).